Here is a 248-residue protein sequence, read N- to C-terminus: Phosphatidylserine decarboxylase proenzyme (248 aa).

Residue S206 is the Schiff-base intermediate with substrate; via pyruvic acid of the active site. Position 206 is a pyruvic acid (Ser); by autocatalysis (S206).

It belongs to the phosphatidylserine decarboxylase family. PSD-A subfamily. In terms of assembly, heterodimer of a large membrane-associated beta subunit and a small pyruvoyl-containing alpha subunit. Pyruvate is required as a cofactor. Post-translationally, is synthesized initially as an inactive proenzyme. Formation of the active enzyme involves a self-maturation process in which the active site pyruvoyl group is generated from an internal serine residue via an autocatalytic post-translational modification. Two non-identical subunits are generated from the proenzyme in this reaction, and the pyruvate is formed at the N-terminus of the alpha chain, which is derived from the carboxyl end of the proenzyme. The post-translation cleavage follows an unusual pathway, termed non-hydrolytic serinolysis, in which the side chain hydroxyl group of the serine supplies its oxygen atom to form the C-terminus of the beta chain, while the remainder of the serine residue undergoes an oxidative deamination to produce ammonia and the pyruvoyl prosthetic group on the alpha chain.

It localises to the cell membrane. The enzyme catalyses a 1,2-diacyl-sn-glycero-3-phospho-L-serine + H(+) = a 1,2-diacyl-sn-glycero-3-phosphoethanolamine + CO2. It functions in the pathway phospholipid metabolism; phosphatidylethanolamine biosynthesis; phosphatidylethanolamine from CDP-diacylglycerol: step 2/2. Functionally, catalyzes the formation of phosphatidylethanolamine (PtdEtn) from phosphatidylserine (PtdSer). The protein is Phosphatidylserine decarboxylase proenzyme of Nitrobacter hamburgensis (strain DSM 10229 / NCIMB 13809 / X14).